A 375-amino-acid polypeptide reads, in one-letter code: tRNA-specific 2-thiouridylase MnmA (375 aa).

Residues 12–19 (GMSGGVDS) and methionine 38 each bind ATP. An interaction with target base in tRNA region spans residues 98 to 100 (NPD). The active-site Nucleophile is cysteine 103. Cysteine 103 and cysteine 200 are joined by a disulfide. Glycine 127 serves as a coordination point for ATP. The interaction with tRNA stretch occupies residues 150–152 (KDQ). Cysteine 200 (cysteine persulfide intermediate) is an active-site residue. The segment at 312–313 (RY) is interaction with tRNA.

It belongs to the MnmA/TRMU family.

Its subcellular location is the cytoplasm. The catalysed reaction is S-sulfanyl-L-cysteinyl-[protein] + uridine(34) in tRNA + AH2 + ATP = 2-thiouridine(34) in tRNA + L-cysteinyl-[protein] + A + AMP + diphosphate + H(+). Its function is as follows. Catalyzes the 2-thiolation of uridine at the wobble position (U34) of tRNA, leading to the formation of s(2)U34. This is tRNA-specific 2-thiouridylase MnmA from Ligilactobacillus salivarius (strain UCC118) (Lactobacillus salivarius).